A 156-amino-acid polypeptide reads, in one-letter code: Ribosomal RNA large subunit methyltransferase H (156 aa).

Residues L73, G104, and 123–128 (LSALTL) each bind S-adenosyl-L-methionine.

Belongs to the RNA methyltransferase RlmH family. As to quaternary structure, homodimer.

Its subcellular location is the cytoplasm. It catalyses the reaction pseudouridine(1915) in 23S rRNA + S-adenosyl-L-methionine = N(3)-methylpseudouridine(1915) in 23S rRNA + S-adenosyl-L-homocysteine + H(+). Functionally, specifically methylates the pseudouridine at position 1915 (m3Psi1915) in 23S rRNA. This Shewanella denitrificans (strain OS217 / ATCC BAA-1090 / DSM 15013) protein is Ribosomal RNA large subunit methyltransferase H.